The chain runs to 268 residues: Ethylene-responsive transcription factor ERN1 (268 aa).

Positions 1 to 21 (MEIQFQQPNMQNQKAGISVTN) are enriched in polar residues. The disordered stretch occupies residues 1-36 (MEIQFQQPNMQNQKAGISVTNKGGKFKGRNRNSNNT). Positions 38 to 95 (KFVGVRQRPSGRWVAEIKDTTQKIRMWLGTFETAEEAARAYDEAACLLRGSNTRTNFI) form a DNA-binding region, AP2/ERF. The tract at residues 114-154 (NRKGDKKQEDGAVASAPSNSKTTISNTSTITSNDDNKESTL) is disordered. The span at 131 to 146 (SNSKTTISNTSTITSN) shows a compositional bias: low complexity.

Belongs to the AP2/ERF transcription factor family. ERF subfamily. In terms of tissue distribution, expressed in roots, root hairs and leaves. Expressed in root epidermis and root hairs.

The protein resides in the nucleus. Functionally, transcription factor involved in symbiotic nodule signaling in response to rhizobial Nod factors (NFs). Binds to the GCC-box (NF-responsive box) of ENOD11 promoter. Acts as a transcriptional activator of NF-responsive box-containing target gene promoters in root hairs. Functions as a transcriptional regulator required for root infection by symbiotic rhizobia, infection thread (IT) formation and maintenance, and nodule development. Necessary for NF-induced gene expression and spontaneous nodulation activated by CCAMK. Functions downstream of CCAMK to activate nodulation gene expression. Involved in early stages of root nodule development. Functions redundantly with ERN2. Is essential with ERN2 for the initiation of root hair infection, and nodule organogenesis and development. Required for accurate expression of the NF signaling genes ENOD11 and ENOD12. This chain is Ethylene-responsive transcription factor ERN1, found in Medicago truncatula (Barrel medic).